Here is a 1248-residue protein sequence, read N- to C-terminus: ATP-dependent helicase/nuclease subunit A (1248 aa).

The UvrD-like helicase ATP-binding domain occupies 4-480 (TKWTKEQYAA…ILLFKNFRSR (477 aa)). 25-32 (AAAGAGKT) is a binding site for ATP. Residues 523–820 (ETVVGGAIEL…RLMSIHKSKG (298 aa)) form the UvrD-like helicase C-terminal domain.

It belongs to the helicase family. AddA subfamily. In terms of assembly, heterodimer of AddA and AddB/RexB. The cofactor is Mg(2+).

The enzyme catalyses Couples ATP hydrolysis with the unwinding of duplex DNA by translocating in the 3'-5' direction.. It carries out the reaction ATP + H2O = ADP + phosphate + H(+). Its function is as follows. The heterodimer acts as both an ATP-dependent DNA helicase and an ATP-dependent, dual-direction single-stranded exonuclease. Recognizes the chi site generating a DNA molecule suitable for the initiation of homologous recombination. The AddA nuclease domain is required for chi fragment generation; this subunit has the helicase and 3' -&gt; 5' nuclease activities. This is ATP-dependent helicase/nuclease subunit A from Ruminiclostridium cellulolyticum (strain ATCC 35319 / DSM 5812 / JCM 6584 / H10) (Clostridium cellulolyticum).